The following is a 309-amino-acid chain: DSC E3 ubiquitin ligase complex subunit C (309 aa).

Residue asparagine 61 is glycosylated (N-linked (GlcNAc...) asparagine). Disordered stretches follow at residues 88–110 and 148–177; these read LPPSPSRTPVVQEDATTVKGKGK and EQADEDYTGRKKQQQPPPSTTSAPRGFDRL. Helical transmembrane passes span 257–277 and 289–309; these read DDMLWGAVMGFFWPVGCAMWL and GLAVFVGVVINVAFGAMRIMN.

This sequence belongs to the dsc3 family. As to quaternary structure, component of the DSC E3 ubiquitin ligase complex composed of dscA, dscB, dscC and dscD.

It localises to the endoplasmic reticulum membrane. The protein operates within protein modification; protein ubiquitination. Its function is as follows. Component of the DSC E3 ubiquitin ligase complex which is required for the srbA transcriptional activator proteolytic cleavage to release the soluble transcription factor from the membrane in low oxygen or sterol conditions. Required for growth during hypoxia and triazole drug susceptibility, as well as for virulence in a murine model of invasive pulmonary aspergillosis (IPA). This chain is DSC E3 ubiquitin ligase complex subunit C, found in Aspergillus fumigatus (strain ATCC MYA-4609 / CBS 101355 / FGSC A1100 / Af293) (Neosartorya fumigata).